The primary structure comprises 505 residues: Glutamyl-tRNA(Gln) amidotransferase subunit A, mitochondrial (505 aa).

Residues Lys76 and Ser158 each act as charge relay system in the active site. Ser182 acts as the Acyl-ester intermediate in catalysis.

The protein belongs to the amidase family. GatA subfamily. In terms of assembly, subunit of the heterotrimeric GatCAB amidotransferase (AdT) complex, composed of A, B and C subunits.

It localises to the mitochondrion. It carries out the reaction L-glutamyl-tRNA(Gln) + L-glutamine + ATP + H2O = L-glutaminyl-tRNA(Gln) + L-glutamate + ADP + phosphate + H(+). Its function is as follows. Allows the formation of correctly charged Gln-tRNA(Gln) through the transamidation of misacylated Glu-tRNA(Gln) in the mitochondria. The reaction takes place in the presence of glutamine and ATP through an activated gamma-phospho-Glu-tRNA(Gln). The sequence is that of Glutamyl-tRNA(Gln) amidotransferase subunit A, mitochondrial from Ixodes scapularis (Black-legged tick).